We begin with the raw amino-acid sequence, 361 residues long: MNKLALYCRSGFEKELAAEITEKATALGVFGFARVVENSGYVIFECYQIGEADLLARKITFSQLIFARQLIVVSDLISNLSVQDRISPIIEYYRQQEKILNLKQSSDIWVETADTNEAKTRAAFCRKFTVPLRQAFRKQGWLQAKNKKSGITLHIFFTQSNSCYIGYSYNNNHAEHIMGIPRLKFPAEAPSRSTLKLEEAILYFIPPNQEATRFNENKYAVDLGACPGGWTYQLVRRGVFVYAVDHGKMATSLHETGRIEHCAEDGFKFRPPKHCKIDWLVCDMVEQPRRIADLISQWLVKGWCKETIFNLKLPMKKRYFEVKRCLQQIKERLNEQHISFQIQAKHLYHDREEITVYIRLM.

Residues serine 193, cysteine 226–glycine 229, aspartate 245, aspartate 265, and aspartate 283 contribute to the S-adenosyl-L-methionine site. Residue lysine 312 is the Proton acceptor of the active site.

Belongs to the class I-like SAM-binding methyltransferase superfamily. RNA methyltransferase RlmE family. RlmM subfamily. In terms of assembly, monomer.

It is found in the cytoplasm. The enzyme catalyses cytidine(2498) in 23S rRNA + S-adenosyl-L-methionine = 2'-O-methylcytidine(2498) in 23S rRNA + S-adenosyl-L-homocysteine + H(+). Catalyzes the 2'-O-methylation at nucleotide C2498 in 23S rRNA. The polypeptide is Ribosomal RNA large subunit methyltransferase M (Histophilus somni (strain 2336) (Haemophilus somnus)).